The chain runs to 920 residues: DNA ligase (920 aa).

Residues 90–94, 139–140, and E173 contribute to the NAD(+) site; these read DAAYD and SL. The active-site N6-AMP-lysine intermediate is the K175. NAD(+)-binding residues include R196, E235, K360, and K384. Positions 481, 484, 500, and 506 each coordinate Zn(2+). Residues 662–691 are disordered; it reads GEAAIESAETQGDTASETTGAPTGAEAPLG. Positions 669–682 are enriched in polar residues; that stretch reads AETQGDTASETTGA. Residues 839–920 form the BRCT domain; sequence SLPQTLAGKT…FAQLLATGTI (82 aa).

Belongs to the NAD-dependent DNA ligase family. LigA subfamily. The cofactor is Mg(2+). Mn(2+) is required as a cofactor.

It carries out the reaction NAD(+) + (deoxyribonucleotide)n-3'-hydroxyl + 5'-phospho-(deoxyribonucleotide)m = (deoxyribonucleotide)n+m + AMP + beta-nicotinamide D-nucleotide.. Functionally, DNA ligase that catalyzes the formation of phosphodiester linkages between 5'-phosphoryl and 3'-hydroxyl groups in double-stranded DNA using NAD as a coenzyme and as the energy source for the reaction. It is essential for DNA replication and repair of damaged DNA. The sequence is that of DNA ligase from Bifidobacterium longum (strain DJO10A).